A 189-amino-acid chain; its full sequence is Elongation factor P (189 aa).

The residue at position 34 (K34) is an N6-(3,6-diaminohexanoyl)-5-hydroxylysine.

It belongs to the elongation factor P family. In terms of processing, may be beta-lysylated on the epsilon-amino group of Lys-34 by the combined action of EpmA and EpmB, and then hydroxylated on the C5 position of the same residue by EpmC (if this protein is present). Lysylation is critical for the stimulatory effect of EF-P on peptide-bond formation. The lysylation moiety may extend toward the peptidyltransferase center and stabilize the terminal 3-CCA end of the tRNA. Hydroxylation of the C5 position on Lys-34 may allow additional potential stabilizing hydrogen-bond interactions with the P-tRNA.

It is found in the cytoplasm. Its pathway is protein biosynthesis; polypeptide chain elongation. Functionally, involved in peptide bond synthesis. Alleviates ribosome stalling that occurs when 3 or more consecutive Pro residues or the sequence PPG is present in a protein, possibly by augmenting the peptidyl transferase activity of the ribosome. Modification of Lys-34 is required for alleviation. This Francisella tularensis subsp. tularensis (strain FSC 198) protein is Elongation factor P.